We begin with the raw amino-acid sequence, 83 residues long: Apolipoprotein C-I (83 aa).

A signal peptide spans M1–A26.

Belongs to the apolipoprotein C1 family.

Its subcellular location is the secreted. In terms of biological role, inhibitor of lipoprotein binding to the low density lipoprotein (LDL) receptor, LDL receptor-related protein, and very low density lipoprotein (VLDL) receptor. Associates with high density lipoproteins (HDL) and the triacylglycerol-rich lipoproteins in the plasma and makes up about 10% of the protein of the VLDL and 2% of that of HDL. Appears to interfere directly with fatty acid uptake and is also the major plasma inhibitor of cholesteryl ester transfer protein (CETP). Binds free fatty acids and reduces their intracellular esterification. Modulates the interaction of APOE with beta-migrating VLDL and inhibits binding of beta-VLDL to the LDL receptor-related protein. In Rousettus aegyptiacus (Egyptian fruit bat), this protein is Apolipoprotein C-I (APOC1).